We begin with the raw amino-acid sequence, 183 residues long: Peptide deformylase (183 aa).

Positions 110 and 153 each coordinate Fe cation. Residue Glu154 is part of the active site. His157 provides a ligand contact to Fe cation.

The protein belongs to the polypeptide deformylase family. Requires Fe(2+) as cofactor.

The catalysed reaction is N-terminal N-formyl-L-methionyl-[peptide] + H2O = N-terminal L-methionyl-[peptide] + formate. Functionally, removes the formyl group from the N-terminal Met of newly synthesized proteins. Requires at least a dipeptide for an efficient rate of reaction. N-terminal L-methionine is a prerequisite for activity but the enzyme has broad specificity at other positions. The chain is Peptide deformylase from Listeria welshimeri serovar 6b (strain ATCC 35897 / DSM 20650 / CCUG 15529 / CIP 8149 / NCTC 11857 / SLCC 5334 / V8).